Here is a 1007-residue protein sequence, read N- to C-terminus: Protocadherin alpha-C2 (1007 aa).

An N-terminal signal peptide occupies residues Met1–Ser42. 5 Cadherin domains span residues Gln43 to Phe148, Pro149 to Phe257, Asp258 to Val365, Val374 to Phe469, and Leu470 to Ile579. The Extracellular portion of the chain corresponds to Gln43–Leu708. N-linked (GlcNAc...) asparagine glycans are attached at residues Asn280 and Asn436. Residues Asn586 and Asn657 are each glycosylated (N-linked (GlcNAc...) asparagine). A Cadherin 6 domain is found at Gly594–Thr691. A helical transmembrane segment spans residues Ile709 to Ile729. Topologically, residues Lys730 to Gln1007 are cytoplasmic. PXXP repeat units lie at residues Pro856–Pro859, Pro889–Pro892, Pro930–Pro933, and Pro948–Pro951. Positions Pro856–Pro951 are 4 X 4 AA repeats of P-X-X-P. The tract at residues Leu885–Gln1007 is disordered. Over residues Asp966–Lys980 the composition is skewed to basic and acidic residues.

It localises to the cell membrane. Functionally, potential calcium-dependent cell-adhesion protein. May be involved in the establishment and maintenance of specific neuronal connections in the brain. This chain is Protocadherin alpha-C2 (PCDHAC2), found in Pan troglodytes (Chimpanzee).